Here is a 141-residue protein sequence, read N- to C-terminus: Venom protein family 1 protein 1 (141 aa).

A signal peptide spans 1–17 (MKSFIVVLCCLFAITYG). C62 and C139 form a disulfide bridge.

This sequence belongs to the insect vpf1 family. In terms of tissue distribution, expressed by the venom gland (posterior main gland) (at protein level).

It is found in the secreted. This Platymeris rhadamanthus (Red spot assassin bug) protein is Venom protein family 1 protein 1.